The chain runs to 137 residues: Ribonuclease P protein component (137 aa).

The protein belongs to the RnpA family. Consists of a catalytic RNA component (M1 or rnpB) and a protein subunit.

The catalysed reaction is Endonucleolytic cleavage of RNA, removing 5'-extranucleotides from tRNA precursor.. Its function is as follows. RNaseP catalyzes the removal of the 5'-leader sequence from pre-tRNA to produce the mature 5'-terminus. It can also cleave other RNA substrates such as 4.5S RNA. The protein component plays an auxiliary but essential role in vivo by binding to the 5'-leader sequence and broadening the substrate specificity of the ribozyme. The chain is Ribonuclease P protein component from Porphyromonas gingivalis (strain ATCC 33277 / DSM 20709 / CIP 103683 / JCM 12257 / NCTC 11834 / 2561).